The following is a 476-amino-acid chain: MEYEAVIGLEVHAELKTASKAFCSCSTAFGGEPNTHVCPVCLGLPGVLPVINRQVVEFGLKTALALNCRVAPFCKFDRKNYYYPDLPKNYQISQYDLPLATGGYLKINVDGQERVIGITRVHMEEDAGKLVHVDGPGGGYSLVDYNRTGVPLLEIVSEPDLRSPAEARAYMEKLRAILQYLDVSDCKMEEGSLRCDANVSVRPRGSQTFGTKTEVKNMNSFRALQRALEYEIERQIAILEGGGRVEQATMAWDESRGVTTVMRTKEQAHDYRYFPEPDLVPLEIDAAWIERVRRELPELPDARCRRLMDTFGLPAYDAGVITSSRDLADYFDRVVARYPDAKVVSNWIMGDFLRLLNARNLEPGQAPVPPEELADLLELQKEGTISGKIAKQVLEEMFASGKGARQIVQERGLVQISDTAALGKIVDEVLAANPNVVEDYRNGKEKALGFLVGQVMKATGGKANPGLVNKLLKERL.

This sequence belongs to the GatB/GatE family. GatB subfamily. In terms of assembly, heterotrimer of A, B and C subunits.

It catalyses the reaction L-glutamyl-tRNA(Gln) + L-glutamine + ATP + H2O = L-glutaminyl-tRNA(Gln) + L-glutamate + ADP + phosphate + H(+). It carries out the reaction L-aspartyl-tRNA(Asn) + L-glutamine + ATP + H2O = L-asparaginyl-tRNA(Asn) + L-glutamate + ADP + phosphate + 2 H(+). Functionally, allows the formation of correctly charged Asn-tRNA(Asn) or Gln-tRNA(Gln) through the transamidation of misacylated Asp-tRNA(Asn) or Glu-tRNA(Gln) in organisms which lack either or both of asparaginyl-tRNA or glutaminyl-tRNA synthetases. The reaction takes place in the presence of glutamine and ATP through an activated phospho-Asp-tRNA(Asn) or phospho-Glu-tRNA(Gln). The chain is Aspartyl/glutamyl-tRNA(Asn/Gln) amidotransferase subunit B from Moorella thermoacetica (strain ATCC 39073 / JCM 9320).